A 604-amino-acid polypeptide reads, in one-letter code: Beta-(1--&gt;2)glucan export ATP-binding/permease protein NdvA (604 aa).

An ABC transmembrane type-1 domain is found at 21-311 (GWILAFANLL…VVSFINSVFM (291 aa)). 6 helical membrane passes run 22-42 (WILA…PVLF), 68-88 (LLGA…AVAL), 146-166 (EHFA…YINW), 168-188 (LAIL…LVVH), 238-258 (LLAL…ITRA), and 285-305 (IVMF…VVSF). The ABC transporter domain maps to 345-579 (VEFKDVSFSY…QGHFAALARA (235 aa)). 378–385 (GATGAGKS) contributes to the ATP binding site.

Belongs to the ABC transporter superfamily. Beta-(1--&gt;2)glucan exporter (TC 3.A.1.108.1) family. As to quaternary structure, homodimer.

It localises to the cell inner membrane. The enzyme catalyses [(1-&gt;2)-beta-D-glucosyl](n)(in) + ATP + H2O = [(1-&gt;2)-beta-D-glucosyl](n)(out) + ADP + phosphate + H(+). Involved in beta-(1--&gt;2)glucan export. Transmembrane domains (TMD) form a pore in the inner membrane and the ATP-binding domain (NBD) is responsible for energy generation. In Rhodopseudomonas palustris (strain BisB18), this protein is Beta-(1--&gt;2)glucan export ATP-binding/permease protein NdvA.